The primary structure comprises 190 residues: Recombination protein RecR (190 aa).

The segment at cysteine 58–cysteine 73 adopts a C4-type zinc-finger fold. A Toprim domain is found at asparagine 81–proline 167.

It belongs to the RecR family.

May play a role in DNA repair. It seems to be involved in an RecBC-independent recombinational process of DNA repair. It may act with RecF and RecO. This Campylobacter jejuni subsp. jejuni serotype O:6 (strain 81116 / NCTC 11828) protein is Recombination protein RecR.